A 440-amino-acid chain; its full sequence is UDP-N-acetylglucosamine 1-carboxyvinyltransferase 1 (440 aa).

22-23 lines the phosphoenolpyruvate pocket; that stretch reads KN. Arg93 serves as a coordination point for UDP-N-acetyl-alpha-D-glucosamine. Catalysis depends on Cys117, which acts as the Proton donor. At Cys117 the chain carries 2-(S-cysteinyl)pyruvic acid O-phosphothioketal. Residues 122–126, Asp306, and Val328 each bind UDP-N-acetyl-alpha-D-glucosamine; that span reads RPIDQ.

Belongs to the EPSP synthase family. MurA subfamily.

The protein resides in the cytoplasm. It catalyses the reaction phosphoenolpyruvate + UDP-N-acetyl-alpha-D-glucosamine = UDP-N-acetyl-3-O-(1-carboxyvinyl)-alpha-D-glucosamine + phosphate. It functions in the pathway cell wall biogenesis; peptidoglycan biosynthesis. Its function is as follows. Cell wall formation. Adds enolpyruvyl to UDP-N-acetylglucosamine. The chain is UDP-N-acetylglucosamine 1-carboxyvinyltransferase 1 from Halalkalibacterium halodurans (strain ATCC BAA-125 / DSM 18197 / FERM 7344 / JCM 9153 / C-125) (Bacillus halodurans).